Consider the following 271-residue polypeptide: Mannosyl-3-phosphoglycerate phosphatase (271 aa).

Aspartate 13 functions as the Nucleophile in the catalytic mechanism. Aspartate 13, aspartate 15, and aspartate 214 together coordinate Mg(2+).

It belongs to the HAD-like hydrolase superfamily. MPGP family. Mg(2+) serves as cofactor.

The protein localises to the cytoplasm. It carries out the reaction 2-O-(alpha-D-mannosyl)-3-phosphoglycerate + H2O = (2R)-2-O-(alpha-D-mannosyl)-glycerate + phosphate. This is Mannosyl-3-phosphoglycerate phosphatase from Escherichia coli O139:H28 (strain E24377A / ETEC).